The sequence spans 478 residues: Cytochrome c-552 (478 aa).

Positions 1-26 (MTRIKINARRIFSLLIPFFFFTSVHA) are cleaved as a signal peptide. H94 lines the heme c pocket. 3 residues coordinate heme: C122, C125, and K126. Residues C160, C163, H164, C209, C212, and H213 each contribute to the heme c site. E215, Y216, K261, and Q263 together coordinate Ca(2+). Y216 lines the substrate pocket. H264 provides a ligand contact to substrate. Heme c-binding residues include H275, C282, C285, H286, H301, C314, C317, H318, and H393.

Belongs to the cytochrome c-552 family. Ca(2+) serves as cofactor. The cofactor is heme c.

It is found in the periplasm. It carries out the reaction 6 Fe(III)-[cytochrome c] + NH4(+) + 2 H2O = 6 Fe(II)-[cytochrome c] + nitrite + 8 H(+). The protein operates within nitrogen metabolism; nitrate reduction (assimilation). In terms of biological role, catalyzes the reduction of nitrite to ammonia, consuming six electrons in the process. The chain is Cytochrome c-552 from Escherichia coli O157:H7 (strain EC4115 / EHEC).